Consider the following 1404-residue polypeptide: DNA-directed RNA polymerase subunit beta' (1404 aa).

Zn(2+)-binding residues include cysteine 70, cysteine 72, cysteine 85, and cysteine 88. The Mg(2+) site is built by aspartate 460, aspartate 462, and aspartate 464. Cysteine 825, cysteine 899, cysteine 906, and cysteine 909 together coordinate Zn(2+).

The protein belongs to the RNA polymerase beta' chain family. In terms of assembly, the RNAP catalytic core consists of 2 alpha, 1 beta, 1 beta' and 1 omega subunit. When a sigma factor is associated with the core the holoenzyme is formed, which can initiate transcription. Mg(2+) serves as cofactor. The cofactor is Zn(2+).

It catalyses the reaction RNA(n) + a ribonucleoside 5'-triphosphate = RNA(n+1) + diphosphate. DNA-dependent RNA polymerase catalyzes the transcription of DNA into RNA using the four ribonucleoside triphosphates as substrates. The protein is DNA-directed RNA polymerase subunit beta' of Nitrosomonas europaea (strain ATCC 19718 / CIP 103999 / KCTC 2705 / NBRC 14298).